Here is a 338-residue protein sequence, read N- to C-terminus: 5-dehydro-2-deoxygluconokinase (338 aa).

It belongs to the carbohydrate kinase PfkB family.

The enzyme catalyses 5-dehydro-2-deoxy-D-gluconate + ATP = 6-phospho-5-dehydro-2-deoxy-D-gluconate + ADP + H(+). Its pathway is polyol metabolism; myo-inositol degradation into acetyl-CoA; acetyl-CoA from myo-inositol: step 5/7. In terms of biological role, catalyzes the phosphorylation of 5-dehydro-2-deoxy-D-gluconate (2-deoxy-5-keto-D-gluconate or DKG) to 6-phospho-5-dehydro-2-deoxy-D-gluconate (DKGP). The protein is 5-dehydro-2-deoxygluconokinase of Clostridium perfringens (strain ATCC 13124 / DSM 756 / JCM 1290 / NCIMB 6125 / NCTC 8237 / Type A).